A 180-amino-acid polypeptide reads, in one-letter code: Secreted RxLR effector protein 5 (180 aa).

Positions M1–A24 are cleaved as a signal peptide. Residues R44 to R60 carry the RxLR-dEER motif.

This sequence belongs to the RxLR effector family.

Its subcellular location is the secreted. It is found in the host cell. Secreted effector that partially suppresses elicitor-induced cell death in host and enhances virulence of P.parasitica. The sequence is that of Secreted RxLR effector protein 5 from Phytophthora nicotianae (Potato buckeye rot agent).